A 139-amino-acid polypeptide reads, in one-letter code: Diacylglycerol acyltransferase/mycolyltransferase Ag85A (139 aa).

The active-site Nucleophile is the S10. S10 and D38 together coordinate substrate. E114 is an active-site residue. Substrate is bound by residues 116–119 (FVRT) and K123.

It belongs to the mycobacterial A85 antigen family. In terms of assembly, homodimer.

It is found in the secreted. The protein resides in the cell wall. It localises to the cytoplasm. The catalysed reaction is an acyl-CoA + a 1,2-diacyl-sn-glycerol = a triacyl-sn-glycerol + CoA. It carries out the reaction 2 alpha,alpha'-trehalose 6-mycolate = alpha,alpha'-trehalose 6,6'-bismycolate + alpha,alpha-trehalose. The antigen 85 proteins (FbpA, FbpB, FbpC) are responsible for the high affinity of mycobacteria for fibronectin, a large adhesive glycoprotein, which facilitates the attachment of M.tuberculosis to murine alveolar macrophages (AMs). They also help to maintain the integrity of the cell wall by catalyzing the transfer of mycolic acids to cell wall arabinogalactan, and through the synthesis of alpha,alpha-trehalose dimycolate (TDM, cord factor). They catalyze the transfer of a mycoloyl residue from one molecule of alpha,alpha-trehalose monomycolate (TMM) to another TMM, leading to the formation of TDM. FbpA mediates triacylglycerol (TAG) formation with long-chain acyl-CoA as the acyl donor and 1,2-dipalmitoyl-sn-glycerol (1,2-dipalmitin) as the acyl acceptor. It has a preference for C26:0-CoA over C18:1-CoA. This chain is Diacylglycerol acyltransferase/mycolyltransferase Ag85A (fbpA), found in Mycobacterium marinum.